We begin with the raw amino-acid sequence, 390 residues long: Precorrin-6Y C(5,15)-methyltransferase [decarboxylating] (390 aa).

Belongs to the precorrin methyltransferase family.

It catalyses the reaction precorrin-6B + 2 S-adenosyl-L-methionine = precorrin-8X + 2 S-adenosyl-L-homocysteine + CO2 + 3 H(+). The protein operates within cofactor biosynthesis; adenosylcobalamin biosynthesis; cob(II)yrinate a,c-diamide from precorrin-2 (aerobic route): step 7/10. Its function is as follows. Catalyzes the methylation of both C-5 and C-15 in precorrin-6Y to form precorrin-8X. In Mycobacterium tuberculosis (strain CDC 1551 / Oshkosh), this protein is Precorrin-6Y C(5,15)-methyltransferase [decarboxylating] (cobL).